Reading from the N-terminus, the 198-residue chain is Elongation factor Ts (198 aa).

Positions 81–84 are involved in Mg(2+) ion dislocation from EF-Tu; sequence TDFV.

It belongs to the EF-Ts family.

Its subcellular location is the cytoplasm. Its function is as follows. Associates with the EF-Tu.GDP complex and induces the exchange of GDP to GTP. It remains bound to the aminoacyl-tRNA.EF-Tu.GTP complex up to the GTP hydrolysis stage on the ribosome. This chain is Elongation factor Ts, found in Pseudothermotoga lettingae (strain ATCC BAA-301 / DSM 14385 / NBRC 107922 / TMO) (Thermotoga lettingae).